A 367-amino-acid polypeptide reads, in one-letter code: Putative heat shock 70 kDa protein 7 (367 aa).

This sequence belongs to the heat shock protein 70 family.

This chain is Putative heat shock 70 kDa protein 7 (HSPA7), found in Homo sapiens (Human).